A 193-amino-acid chain; its full sequence is Peptidyl-tRNA hydrolase (193 aa).

Residue Tyr17 participates in tRNA binding. The active-site Proton acceptor is His22. TRNA is bound by residues Phe68, Asn70, and Asn115.

This sequence belongs to the PTH family. Monomer.

The protein resides in the cytoplasm. It carries out the reaction an N-acyl-L-alpha-aminoacyl-tRNA + H2O = an N-acyl-L-amino acid + a tRNA + H(+). In terms of biological role, hydrolyzes ribosome-free peptidyl-tRNAs (with 1 or more amino acids incorporated), which drop off the ribosome during protein synthesis, or as a result of ribosome stalling. Its function is as follows. Catalyzes the release of premature peptidyl moieties from peptidyl-tRNA molecules trapped in stalled 50S ribosomal subunits, and thus maintains levels of free tRNAs and 50S ribosomes. This is Peptidyl-tRNA hydrolase from Alteromonas mediterranea (strain DSM 17117 / CIP 110805 / LMG 28347 / Deep ecotype).